A 332-amino-acid polypeptide reads, in one-letter code: MMKKPVVIGLAVVVLAAVVAGGYWWYQSRQDNGLTLYGNVDIRTVNLSFRVGGRVESLAVDEGDAIKAGQVLGELDHKPYEIALMQAKAGVSVAQAQYDLMLAGYRNEEIAQAAAAVKQAQAAYDYAQNFYNRQQGLWKSRTISANDLENARSSRDQAQATLKSAQDKLRQYRSGNREQDIAQAKASLEQAQAQLAQAELNLQDSTLIAPSDGTLLTRAVEPGTVLNEGGTVFTVSLTRPVWVRAYVDERNLDQAQPGRKVLLYTDGRPDKPYHGQIGFVSPTAEFTPKTVETPDLRTDLVYRLRIVVTDADDALRQGMPVTVQFGDEAGHE.

Positions 1-16 are cleaved as a signal peptide; the sequence is MMKKPVVIGLAVVVLA. Residues 107 to 209 are a coiled coil; that stretch reads NEEIAQAAAA…LNLQDSTLIA (103 aa).

The protein belongs to the UPF0194 family.

The protein localises to the periplasm. The polypeptide is UPF0194 membrane protein YbhG (Escherichia coli (strain K12 / MC4100 / BW2952)).